The sequence spans 46 residues: U-myrmeciitoxin(01)-Mg6a (46 aa).

The N-terminal stretch at 1 to 20 (MNLKTFCFFLLGIFVTLTVT) is a signal peptide. Positions 21–33 (VIPIANADAEADT) are excised as a propeptide.

Post-translationally, contains 1 disulfide bond. In terms of tissue distribution, expressed by the venom gland.

It localises to the secreted. This Myrmecia gulosa (Red bulldog ant) protein is U-myrmeciitoxin(01)-Mg6a.